The chain runs to 166 residues: Phosphopantetheine adenylyltransferase (166 aa).

Residue Ser9 coordinates substrate. Residues 9–10 (SF) and His17 contribute to the ATP site. The substrate site is built by Lys41, Leu74, and Lys88. ATP is bound by residues 89–91 (GLR), Glu99, and 123–129 (YIHLSST).

Belongs to the bacterial CoaD family. As to quaternary structure, homohexamer. It depends on Mg(2+) as a cofactor.

It is found in the cytoplasm. The catalysed reaction is (R)-4'-phosphopantetheine + ATP + H(+) = 3'-dephospho-CoA + diphosphate. It participates in cofactor biosynthesis; coenzyme A biosynthesis; CoA from (R)-pantothenate: step 4/5. Reversibly transfers an adenylyl group from ATP to 4'-phosphopantetheine, yielding dephospho-CoA (dPCoA) and pyrophosphate. This Pseudarthrobacter chlorophenolicus (strain ATCC 700700 / DSM 12829 / CIP 107037 / JCM 12360 / KCTC 9906 / NCIMB 13794 / A6) (Arthrobacter chlorophenolicus) protein is Phosphopantetheine adenylyltransferase.